The chain runs to 119 residues: Defensin-like protein 260 (119 aa).

The signal sequence occupies residues 1–24; that stretch reads MKIASLKLLLLVSLLFAVTQNGIS. Intrachain disulfides connect C44-C99, C63-C79, C69-C83, and C73-C85.

The protein belongs to the DEFL family.

The protein resides in the secreted. The polypeptide is Defensin-like protein 260 (Arabidopsis thaliana (Mouse-ear cress)).